A 189-amino-acid polypeptide reads, in one-letter code: Auxin-responsive protein IAA3 (189 aa).

The short motif at 12–16 (LRLGL) is the EAR-like (transcriptional repression) element. Positions 42 to 65 (TDTEKEIESSSRKTETSPPRKAQI) are disordered. The span at 43 to 56 (DTEKEIESSSRKTE) shows a compositional bias: basic and acidic residues. The PB1 domain maps to 92-179 (GIYVKVSMDG…TCKRLRIMKG (88 aa)).

The protein belongs to the Aux/IAA family. Homodimers and heterodimers. Interacts with TPL. Interacts with TIR1, the F-box component of the Skp1-Cdc53/cullin-F-box (SCFTIR1) E3 ubiquitin ligase complex. Phosphorylated by phytochrome A in vitro. In terms of tissue distribution, highly expressed in stems and flowers. Expressed in hypocotyls, cotyledons and leaves, but barely detected in roots. Expressed in root tips. In the root meristem, specifically detected at the vascular tissue transition zone.

Its subcellular location is the nucleus. Aux/IAA proteins are short-lived transcriptional factors that function as repressors of early auxin response genes at low auxin concentrations. Repression is thought to result from the interaction with auxin response factors (ARFs), proteins that bind to the auxin-responsive promoter element (AuxRE). Plays a central role in auxin regulation of root growth, in gravitropism, and in lateral root formation. Regulated by an auxin-induced protein turnover. Formation of heterodimers with ARF proteins may alter their ability to modulate early auxin response genes expression. When activated by cytokinin, restricts the expression of the PIN genes to the vascular transition zone. Induction of SHY2 in the vascular transition zone restricts BRX expression to down-regulate PIN3 and thus limit meristem growth, but proper SHY2 expression requires BRX. Involved in meristem growth and in determining its size. May participate in strigolactone signaling to regulate meristem size and lateral root formation. The protein is Auxin-responsive protein IAA3 (IAA3) of Arabidopsis thaliana (Mouse-ear cress).